The chain runs to 248 residues: tRNA (guanine-N(1)-)-methyltransferase (248 aa).

Residues Gly113 and 133 to 138 (IGDFVL) each bind S-adenosyl-L-methionine.

This sequence belongs to the RNA methyltransferase TrmD family. As to quaternary structure, homodimer.

Its subcellular location is the cytoplasm. The enzyme catalyses guanosine(37) in tRNA + S-adenosyl-L-methionine = N(1)-methylguanosine(37) in tRNA + S-adenosyl-L-homocysteine + H(+). Specifically methylates guanosine-37 in various tRNAs. In Dehalococcoides mccartyi (strain ATCC BAA-2100 / JCM 16839 / KCTC 5957 / BAV1), this protein is tRNA (guanine-N(1)-)-methyltransferase.